A 509-amino-acid polypeptide reads, in one-letter code: ATP synthase subunit alpha, mitochondrial (509 aa).

171 to 178 lines the ATP pocket; it reads GDRQTGKT.

The protein belongs to the ATPase alpha/beta chains family. As to quaternary structure, F-type ATPases have 2 components, CF(1) - the catalytic core - and CF(0) - the membrane proton channel. CF(1) has five subunits: alpha(3), beta(3), gamma(1), delta(1), epsilon(1). CF(0) has three main subunits: a, b and c.

Its subcellular location is the mitochondrion. The protein localises to the mitochondrion inner membrane. Its function is as follows. Mitochondrial membrane ATP synthase (F(1)F(0) ATP synthase or Complex V) produces ATP from ADP in the presence of a proton gradient across the membrane which is generated by electron transport complexes of the respiratory chain. F-type ATPases consist of two structural domains, F(1) - containing the extramembraneous catalytic core, and F(0) - containing the membrane proton channel, linked together by a central stalk and a peripheral stalk. During catalysis, ATP synthesis in the catalytic domain of F(1) is coupled via a rotary mechanism of the central stalk subunits to proton translocation. Subunits alpha and beta form the catalytic core in F(1). Rotation of the central stalk against the surrounding alpha(3)beta(3) subunits leads to hydrolysis of ATP in three separate catalytic sites on the beta subunits. Subunit alpha does not bear the catalytic high-affinity ATP-binding sites. The polypeptide is ATP synthase subunit alpha, mitochondrial (ATPA) (Triticum aestivum (Wheat)).